The primary structure comprises 537 residues: CTP synthase (537 aa).

The interval Met-1–Ile-265 is amidoligase domain. CTP is bound at residue Ser-13. Ser-13 is a UTP binding site. ATP-binding positions include Ser-14–Leu-19 and Asp-71. Residues Asp-71 and Glu-139 each coordinate Mg(2+). CTP contacts are provided by residues Asp-146–Glu-148 and Lys-222. Lys-222 contributes to the UTP binding site. One can recognise a Glutamine amidotransferase type-1 domain in the interval Arg-290–Cys-536. Gly-352 is a binding site for L-glutamine. Residue Cys-379 is the Nucleophile; for glutamine hydrolysis of the active site. L-glutamine is bound by residues Phe-380–Gln-383, Glu-403, and Arg-464. Catalysis depends on residues His-509 and Glu-511.

It belongs to the CTP synthase family. Homotetramer.

The catalysed reaction is UTP + L-glutamine + ATP + H2O = CTP + L-glutamate + ADP + phosphate + 2 H(+). The enzyme catalyses L-glutamine + H2O = L-glutamate + NH4(+). It catalyses the reaction UTP + NH4(+) + ATP = CTP + ADP + phosphate + 2 H(+). The protein operates within pyrimidine metabolism; CTP biosynthesis via de novo pathway; CTP from UDP: step 2/2. Its activity is regulated as follows. Allosterically activated by GTP, when glutamine is the substrate; GTP has no effect on the reaction when ammonia is the substrate. The allosteric effector GTP functions by stabilizing the protein conformation that binds the tetrahedral intermediate(s) formed during glutamine hydrolysis. Inhibited by the product CTP, via allosteric rather than competitive inhibition. Functionally, catalyzes the ATP-dependent amination of UTP to CTP with either L-glutamine or ammonia as the source of nitrogen. Regulates intracellular CTP levels through interactions with the four ribonucleotide triphosphates. This chain is CTP synthase, found in Rickettsia rickettsii (strain Iowa).